Here is a 33-residue protein sequence, read N- to C-terminus: Protamine-1B (33 aa).

The interval 1–33 (PRRRRRRSSSRPIRRRRPRRVSRRRRRGGRRRR) is disordered.

Testis.

Its subcellular location is the nucleus. It localises to the chromosome. Functionally, protamines substitute for histones in the chromatin of sperm during the haploid phase of spermatogenesis. They compact sperm DNA into a highly condensed, stable and inactive complex. This chain is Protamine-1B, found in Oncorhynchus mykiss (Rainbow trout).